A 129-amino-acid polypeptide reads, in one-letter code: SPbeta prophage-derived protein NrdI (129 aa).

Belongs to the NrdI family.

Functionally, probably involved in ribonucleotide reductase function. This chain is SPbeta prophage-derived protein NrdI (nrdIB), found in Bacillus subtilis (strain 168).